Consider the following 612-residue polypeptide: Proline-rich protein 14 (612 aa).

Residue M1 is modified to N-acetylmethionine. 2 stretches are compositionally biased toward polar residues: residues 1–15 (MDLP…QPSL) and 86–96 (VCTQSPALPSQ). Disordered stretches follow at residues 1–48 (MDLP…EKAS), 65–96 (VPLT…LPSQ), 119–150 (RARQ…QVPQ), and 206–256 (PTLT…PALE). The tract at residues 1-135 (MDLPGNSSPF…ALRMRSRAAS (135 aa)) is sufficient for heterochromatin association in interphase and chromatin association in anaphase. The interval 85–405 (PVCTQSPALP…MARTPPPPRP (321 aa)) is required for the interaction with GRB2 and sufficient to promote the phosphorylation of AKT and cell proliferation. A required for nuclear lamina association region spans residues 136 to 392 (GPEESPSKKT…QSRPRRHTVG (257 aa)). Positions 243 to 252 (ADPPESPVPD) are enriched in pro residues. S307 bears the Phosphoserine mark. Disordered stretches follow at residues 323–405 (QSRA…PPRP), 444–463 (LGST…FSDP), and 553–583 (DSSL…PSQD). Positions 342-359 (WRTQCNSLAPVSKSSLGR) are enriched in polar residues. The segment covering 366-379 (LGPPDPGSWPPVPS) has biased composition (pro residues). Over residues 448-463 (KGKELRASKDKVFSDP) the composition is skewed to basic and acidic residues. The required for nuclear localization stretch occupies residues 546–563 (RRAVEFRDSSLPRSRRPS). Residues 570 to 583 (ASRTLTPNLAPSQD) show a composition bias toward polar residues.

As to quaternary structure, interacts (via proline-rich region) with GRB2 (via SH3 domain 2). Interacts (via N-terminus) with CBX5.

Its subcellular location is the chromosome. The protein resides in the nucleus. It is found in the nucleus lamina. The protein localises to the nucleoplasm. Its function is as follows. Functions in tethering peripheral heterochromatin to the nuclear lamina during interphase, possibly through the interaction with heterochromatin protein CBX5/HP1 alpha. Might play a role in reattaching heterochromatin to the nuclear lamina at mitotic exit. Promotes myoblast differentiation during skeletal myogenesis, possibly by stimulating transcription factor MyoD activity via binding to CBX5/HP1 alpha. Involved in the positive regulation of the PI3K-Akt-mTOR signaling pathway and in promoting cell proliferation, possibly via binding to GRB2. The sequence is that of Proline-rich protein 14 (Prr14) from Mus musculus (Mouse).